The following is a 115-amino-acid chain: Large ribosomal subunit protein bL20 (115 aa).

This sequence belongs to the bacterial ribosomal protein bL20 family.

In terms of biological role, binds directly to 23S ribosomal RNA and is necessary for the in vitro assembly process of the 50S ribosomal subunit. It is not involved in the protein synthesizing functions of that subunit. The sequence is that of Large ribosomal subunit protein bL20 from Chlorobaculum parvum (strain DSM 263 / NCIMB 8327) (Chlorobium vibrioforme subsp. thiosulfatophilum).